The following is a 309-amino-acid chain: Homoserine O-succinyltransferase (309 aa).

Cys142 functions as the Acyl-thioester intermediate in the catalytic mechanism. Substrate contacts are provided by Lys163 and Ser192. His235 functions as the Proton acceptor in the catalytic mechanism. Glu237 is an active-site residue. Residue Arg249 participates in substrate binding.

This sequence belongs to the MetA family. In terms of assembly, homodimer.

Its subcellular location is the cytoplasm. The catalysed reaction is L-homoserine + succinyl-CoA = O-succinyl-L-homoserine + CoA. Its pathway is amino-acid biosynthesis; L-methionine biosynthesis via de novo pathway; O-succinyl-L-homoserine from L-homoserine: step 1/1. Its function is as follows. Transfers a succinyl group from succinyl-CoA to L-homoserine, forming succinyl-L-homoserine. This Escherichia coli O139:H28 (strain E24377A / ETEC) protein is Homoserine O-succinyltransferase.